The sequence spans 168 residues: Endoribonuclease YbeY (168 aa).

3 residues coordinate Zn(2+): histidine 132, histidine 136, and histidine 142.

Belongs to the endoribonuclease YbeY family. Requires Zn(2+) as cofactor.

The protein resides in the cytoplasm. In terms of biological role, single strand-specific metallo-endoribonuclease involved in late-stage 70S ribosome quality control and in maturation of the 3' terminus of the 16S rRNA. The sequence is that of Endoribonuclease YbeY from Clostridium perfringens (strain SM101 / Type A).